Consider the following 175-residue polypeptide: MSERIILDEAAIQRTITRIAHEILEYNKGTKDLVLLGIKTRGAFLAHRIQDKINSIEQQLVPTGTIDITHFRDDVDKVVQQADQYAFDINVDINNKVVVIIDDVLYTGRTVRASLDAILLHTRPIKIGLAALVDRGHRELPIRADFVGKNIPTARDESVSVYLEEIDDRNAVVIE.

Substrate is bound by residues 40-41 (TR), 102-110 (DDVLYTGRT), R135, and V159. The short motif at 98 to 110 (VVIIDDVLYTGRT) is the PRPP-binding element.

This sequence belongs to the purine/pyrimidine phosphoribosyltransferase family. PyrR subfamily. As to quaternary structure, homodimer and homohexamer; in equilibrium.

The enzyme catalyses UMP + diphosphate = 5-phospho-alpha-D-ribose 1-diphosphate + uracil. Its function is as follows. Regulates transcriptional attenuation of the pyrimidine nucleotide (pyr) operon by binding in a uridine-dependent manner to specific sites on pyr mRNA. This disrupts an antiterminator hairpin in the RNA and favors formation of a downstream transcription terminator, leading to a reduced expression of downstream genes. In terms of biological role, also displays a weak uracil phosphoribosyltransferase activity which is not physiologically significant. The sequence is that of Bifunctional protein PyrR from Staphylococcus epidermidis (strain ATCC 12228 / FDA PCI 1200).